The chain runs to 439 residues: Dihydroorotase (439 aa).

2 residues coordinate Zn(2+): histidine 65 and histidine 67. Substrate is bound by residues 67–69 and asparagine 99; that span reads HFR. Zn(2+) is bound by residues aspartate 156, histidine 183, histidine 246, and aspartate 321. Aspartate 321 is an active-site residue. Residues histidine 325 and 339–340 contribute to the substrate site; that span reads FG.

This sequence belongs to the metallo-dependent hydrolases superfamily. DHOase family. Class I DHOase subfamily. Zn(2+) serves as cofactor.

It catalyses the reaction (S)-dihydroorotate + H2O = N-carbamoyl-L-aspartate + H(+). Its pathway is pyrimidine metabolism; UMP biosynthesis via de novo pathway; (S)-dihydroorotate from bicarbonate: step 3/3. Its function is as follows. Catalyzes the reversible cyclization of carbamoyl aspartate to dihydroorotate. This chain is Dihydroorotase, found in Chlorobaculum tepidum (strain ATCC 49652 / DSM 12025 / NBRC 103806 / TLS) (Chlorobium tepidum).